The following is a 375-amino-acid chain: N5-carboxyaminoimidazole ribonucleotide synthase (375 aa).

Residues arginine 108, lysine 148, 153–159, 183–186, glutamate 191, histidine 214, and 266–267 contribute to the ATP site; these read GYDGKGQ, EQYL, and NE. The ATP-grasp domain occupies 112 to 296; sequence KQTLLEANTQ…QFDTHILAIT (185 aa).

The protein belongs to the PurK/PurT family. Homodimer.

It carries out the reaction 5-amino-1-(5-phospho-beta-D-ribosyl)imidazole + hydrogencarbonate + ATP = 5-carboxyamino-1-(5-phospho-D-ribosyl)imidazole + ADP + phosphate + 2 H(+). It participates in purine metabolism; IMP biosynthesis via de novo pathway; 5-amino-1-(5-phospho-D-ribosyl)imidazole-4-carboxylate from 5-amino-1-(5-phospho-D-ribosyl)imidazole (N5-CAIR route): step 1/2. Functionally, catalyzes the ATP-dependent conversion of 5-aminoimidazole ribonucleotide (AIR) and HCO(3)(-) to N5-carboxyaminoimidazole ribonucleotide (N5-CAIR). The sequence is that of N5-carboxyaminoimidazole ribonucleotide synthase from Staphylococcus epidermidis (strain ATCC 35984 / DSM 28319 / BCRC 17069 / CCUG 31568 / BM 3577 / RP62A).